The chain runs to 140 residues: MSHKAWQNAHAMYENDACAKALGIDIISMDEGFAVVTMTVTAQMLNGHQSCHGGQLFSLADTAFAYACNSQGLAAVASACTIDFLRPGFAGDTLTATAQVRHQGKQTGVYDIEIVNQQQKTVALFRGKSHRIGGTITGEA.

Homotetramer.

It participates in aromatic compound metabolism; phenylacetate degradation. Its function is as follows. Thioesterase with a preference for ring-hydroxylated phenylacetyl-CoA esters. Hydrolyzes 3,4-dihydroxyphenylacetyl-CoA, 3-hydroxyphenylacetyl-CoA and 4-hydroxyphenylacetyl-CoA. Inactive towards 4-hydroxybenzoyl-CoA and 4-hydroxyphenacyl-CoA. This chain is Acyl-coenzyme A thioesterase PaaI (paaI), found in Escherichia coli (strain K12).